Consider the following 132-residue polypeptide: Ribonuclease VapC15 (132 aa).

The region spanning Met-1–Arg-121 is the PINc domain. Asp-96 provides a ligand contact to Mg(2+). Residues Asp-96, Asp-114, and Asp-116 each contribute to the Mn(2+) site.

This sequence belongs to the PINc/VapC protein family. In terms of assembly, crystallizes as a VapB15-VapC15(2) heterotrimer and as a VapB15(2)-VapC15(2) heterotetramer; each toxin pair forms a homodimer which creates a channel in which the antitoxin binds. Requires Mg(2+) as cofactor. Mn(2+) serves as cofactor.

Its activity is regulated as follows. RNase activity inhibited by EDTA. Its function is as follows. Toxic component of a type II toxin-antitoxin (TA) system. Degrades total E.coli RNA, which is partially inhibited by cognate antitoxin VapB15. Upon expression in M.smegmatis inhibits colony formation, which is neutralized by coexpression with VapB15. In Mycobacterium tuberculosis (strain ATCC 25618 / H37Rv), this protein is Ribonuclease VapC15.